A 424-amino-acid polypeptide reads, in one-letter code: Tol-Pal system protein TolB (424 aa).

Positions 1-20 (MKQFIVFILSLYTTLSWAVL) are cleaved as a signal peptide.

This sequence belongs to the TolB family. In terms of assembly, the Tol-Pal system is composed of five core proteins: the inner membrane proteins TolA, TolQ and TolR, the periplasmic protein TolB and the outer membrane protein Pal. They form a network linking the inner and outer membranes and the peptidoglycan layer.

It localises to the periplasm. Its function is as follows. Part of the Tol-Pal system, which plays a role in outer membrane invagination during cell division and is important for maintaining outer membrane integrity. This is Tol-Pal system protein TolB from Vesicomyosocius okutanii subsp. Calyptogena okutanii (strain HA).